Consider the following 257-residue polypeptide: 1-(5-phosphoribosyl)-5-[(5-phosphoribosylamino)methylideneamino] imidazole-4-carboxamide isomerase (257 aa).

Aspartate 8 functions as the Proton acceptor in the catalytic mechanism. Aspartate 129 functions as the Proton donor in the catalytic mechanism.

The protein belongs to the HisA/HisF family.

Its subcellular location is the cytoplasm. It carries out the reaction 1-(5-phospho-beta-D-ribosyl)-5-[(5-phospho-beta-D-ribosylamino)methylideneamino]imidazole-4-carboxamide = 5-[(5-phospho-1-deoxy-D-ribulos-1-ylimino)methylamino]-1-(5-phospho-beta-D-ribosyl)imidazole-4-carboxamide. It participates in amino-acid biosynthesis; L-histidine biosynthesis; L-histidine from 5-phospho-alpha-D-ribose 1-diphosphate: step 4/9. The chain is 1-(5-phosphoribosyl)-5-[(5-phosphoribosylamino)methylideneamino] imidazole-4-carboxamide isomerase from Crocosphaera subtropica (strain ATCC 51142 / BH68) (Cyanothece sp. (strain ATCC 51142)).